The chain runs to 803 residues: Translation initiation factor IF-2 (803 aa).

Disordered regions lie at residues 95 to 125 (PVVEQKRETEPAPTQEVPLTSDTTNLNEKAE) and 138 to 178 (EVKE…EREE). Positions 111 to 121 (VPLTSDTTNLN) are enriched in polar residues. Residues 138–155 (EVKEEAKKTPSEKKETPK) show a composition bias toward basic and acidic residues. Over residues 156 to 167 (KGPRKETRRSRK) the composition is skewed to basic residues. Basic and acidic residues predominate over residues 168–178 (PDKEDKWEREE). The 170-residue stretch at 302-471 (PRAPVVTIMG…LLQAEVLELK (170 aa)) folds into the tr-type G domain. A G1 region spans residues 311 to 318 (GHVDHGKT). GTP is bound at residue 311-318 (GHVDHGKT). The G2 stretch occupies residues 336–340 (GITQH). A G3 region spans residues 357-360 (DTPG). GTP-binding positions include 357–361 (DTPGH) and 411–414 (NKID). Residues 411-414 (NKID) form a G4 region. The tract at residues 447-449 (SAK) is G5.

It belongs to the TRAFAC class translation factor GTPase superfamily. Classic translation factor GTPase family. IF-2 subfamily.

The protein localises to the cytoplasm. Functionally, one of the essential components for the initiation of protein synthesis. Protects formylmethionyl-tRNA from spontaneous hydrolysis and promotes its binding to the 30S ribosomal subunits. Also involved in the hydrolysis of GTP during the formation of the 70S ribosomal complex. This Coxiella burnetii (strain CbuK_Q154) (Coxiella burnetii (strain Q154)) protein is Translation initiation factor IF-2.